The primary structure comprises 588 residues: Protein disulfide-isomerase-like protein of the testis (588 aa).

The signal sequence occupies residues 1–20 (MELLWTPLLLVAACLSEVLG). Asparagine 55, asparagine 157, and asparagine 337 each carry an N-linked (GlcNAc...) asparagine glycan. The region spanning 385–448 (PVKKLVGKNF…IAKIDITAND (64 aa)) is the Thioredoxin domain. Basic and acidic residues-rich tracts occupy residues 531-542 (IEDTSKQDRPVK), 549-567 (SIRK…EREA), and 574-588 (EQPK…KEEL). The interval 531-588 (IEDTSKQDRPVKESPVLDSIRKPEEPERRKETAEREAAAAQPKEQPKPERKLEVKEEL) is disordered. Residues 585–588 (KEEL) carry the Prevents secretion from ER motif.

The protein belongs to the protein disulfide isomerase family. Homodimer. The homodimer is not disulfide-linked. Interacts with CLGN and ERO1A. N-glycosylated. As to expression, testis-specific (at protein level).

The protein resides in the endoplasmic reticulum. Probable redox-inactive chaperone involved in spermatogenesis. The polypeptide is Protein disulfide-isomerase-like protein of the testis (Pdilt) (Mus musculus (Mouse)).